The primary structure comprises 438 residues: GTPase Der (438 aa).

EngA-type G domains follow at residues 4–169 (PVVA…PEKG) and 178–353 (IDVA…DQNS). GTP contacts are provided by residues 10 to 17 (GRPNVGKS), 57 to 61 (DTGGI), 120 to 123 (NKVD), 184 to 191 (GKPNVGKS), 231 to 235 (DTAGL), and 296 to 299 (NKWD). Residues 354-438 (RRVKTGLLNE…PIRLKFKQKT (85 aa)) enclose the KH-like domain.

It belongs to the TRAFAC class TrmE-Era-EngA-EngB-Septin-like GTPase superfamily. EngA (Der) GTPase family. Associates with the 50S ribosomal subunit.

Its function is as follows. GTPase that plays an essential role in the late steps of ribosome biogenesis. In Halothermothrix orenii (strain H 168 / OCM 544 / DSM 9562), this protein is GTPase Der.